A 320-amino-acid polypeptide reads, in one-letter code: Apolipoprotein E (320 aa).

The first 18 residues, Met1 to Gly18, serve as a signal peptide directing secretion. 8 consecutive repeat copies span residues Ala82–Ser103, Pro104–Gly125, Ala126–Gly147, Gln148–Leu169, Arg170–Glu191, Arg192–Ala213, Thr214–Arg236, and Ala237–Glu258. Residues Ala82 to Glu258 are 8 X 22 AA approximate tandem repeats. Met145 bears the Methionine sulfoxide mark. The residue at position 149 (Ser149) is a Phosphoserine. The tract at residues His160–Arg170 is LDL and other lipoprotein receptors binding. Position 164–167 (Leu164–Arg167) interacts with heparin. The lipid-binding and lipoprotein association stretch occupies residues Ala212–Met293. An O-linked (GalNAc...) threonine glycan is attached at Thr214. Gly232–Met239 lines the heparin pocket. A homooligomerization region spans residues Gln269 to His320. The tract at residues Arg281–Met293 is specificity for association with VLDL.

This sequence belongs to the apolipoprotein A1/A4/E family. Homotetramer. May interact with ABCA1; functionally associated with ABCA1 in the biogenesis of HDLs. May interact with APP/A4 amyloid-beta peptide; the interaction is extremely stable in vitro but its physiological significance is unclear. May interact with MAPT. May interact with MAP2. In the cerebrospinal fluid, interacts with secreted SORL1. Interacts with PMEL; this allows the loading of PMEL luminal fragment on ILVs to induce fibril nucleation. APOE exists as multiple glycosylated and sialylated glycoforms within cells and in plasma. The extent of glycosylation and sialylation are tissue and context specific. In terms of processing, glycated in plasma VLDL. Post-translationally, phosphorylated by FAM20C in the extracellular medium.

Its subcellular location is the secreted. It is found in the extracellular space. The protein localises to the extracellular matrix. It localises to the extracellular vesicle. The protein resides in the endosome. Its subcellular location is the multivesicular body. Functionally, APOE is an apolipoprotein, a protein associating with lipid particles, that mainly functions in lipoprotein-mediated lipid transport between organs via the plasma and interstitial fluids. APOE is a core component of plasma lipoproteins and is involved in their production, conversion and clearance. Apolipoproteins are amphipathic molecules that interact both with lipids of the lipoprotein particle core and the aqueous environment of the plasma. As such, APOE associates with chylomicrons, chylomicron remnants, very low density lipoproteins (VLDL) and intermediate density lipoproteins (IDL) but shows a preferential binding to high-density lipoproteins (HDL). It also binds a wide range of cellular receptors including the LDL receptor/LDLR, the LDL receptor-related proteins LRP1, LRP2 and LRP8 and the very low-density lipoprotein receptor/VLDLR that mediate the cellular uptake of the APOE-containing lipoprotein particles. Finally, APOE also has a heparin-binding activity and binds heparan-sulfate proteoglycans on the surface of cells, a property that supports the capture and the receptor-mediated uptake of APOE-containing lipoproteins by cells. A main function of APOE is to mediate lipoprotein clearance through the uptake of chylomicrons, VLDLs, and HDLs by hepatocytes. APOE is also involved in the biosynthesis by the liver of VLDLs as well as their uptake by peripheral tissues ensuring the delivery of triglycerides and energy storage in muscle, heart and adipose tissues. By participating in the lipoprotein-mediated distribution of lipids among tissues, APOE plays a critical role in plasma and tissues lipid homeostasis. APOE is also involved in two steps of reverse cholesterol transport, the HDLs-mediated transport of cholesterol from peripheral tissues to the liver, and thereby plays an important role in cholesterol homeostasis. First, it is functionally associated with ABCA1 in the biogenesis of HDLs in tissues. Second, it is enriched in circulating HDLs and mediates their uptake by hepatocytes. APOE also plays an important role in lipid transport in the central nervous system, regulating neuron survival and sprouting. The chain is Apolipoprotein E (APOE) from Cebus capucinus (White-faced sapajou).